Reading from the N-terminus, the 252-residue chain is TLC domain-containing protein 1 (252 aa).

An N-terminal signal peptide occupies residues Met-1–Ala-29. At Leu-30–Arg-47 the chain is on the extracellular side. A TLC domain is found at Gly-41–Leu-235. The helical transmembrane segment at Asn-48–Trp-68 threads the bilayer. Over Gln-69 to Ser-84 the chain is Cytoplasmic. A helical membrane pass occupies residues Gly-85–Phe-105. Residues Asn-106–Ser-124 lie on the Extracellular side of the membrane. Positions Ala-125–Val-145 form an intramembrane region, helical. Residues Glu-146–Tyr-174 are Extracellular-facing. The chain crosses the membrane as a helical span at residues Val-175–Phe-195. Topologically, residues Val-196–Gln-202 are cytoplasmic. Residues Gly-203–Phe-223 form a helical membrane-spanning segment. At Ser-224–Asp-252 the chain is on the extracellular side.

In terms of assembly, interacts with CACNA1C in vitro; however the relevance of the interaction in vivo is unclear.

It localises to the cell membrane. Its function is as follows. Regulates the composition and fluidity of the plasma membrane. Inhibits the incorporation of membrane-fluidizing phospholipids containing omega-3 long-chain polyunsaturated fatty acids (LCPUFA) and thereby promotes membrane rigidity. Does not appear to have any effect on LCPUFA synthesis. This chain is TLC domain-containing protein 1 (TLCD1), found in Gallus gallus (Chicken).